Here is a 438-residue protein sequence, read N- to C-terminus: Transmembrane protease serine 11F (438 aa).

Topologically, residues methionine 1 to leucine 32 are cytoplasmic. A helical; Signal-anchor for type II membrane protein membrane pass occupies residues phenylalanine 33–valine 53. At glutamate 54–methionine 438 the chain is on the extracellular side. The SEA domain occupies lysine 57–serine 175. The Peptidase S1 domain occupies isoleucine 206 to glycine 437. A disulfide bridge links cysteine 233 with cysteine 249. Active-site charge relay system residues include histidine 248 and aspartate 293. Intrachain disulfides connect cysteine 358–cysteine 374 and cysteine 385–cysteine 413. Catalysis depends on serine 389, which acts as the Charge relay system.

It belongs to the peptidase S1 family.

The protein resides in the membrane. In terms of biological role, probable serine protease. This is Transmembrane protease serine 11F (TMPRSS11F) from Homo sapiens (Human).